A 153-amino-acid polypeptide reads, in one-letter code: Deoxyuridine 5'-triphosphate nucleotidohydrolase (153 aa).

Substrate is bound by residues 71-73 (RSG), asparagine 84, 88-90 (TID), and lysine 98.

It belongs to the dUTPase family. Mg(2+) is required as a cofactor.

The enzyme catalyses dUTP + H2O = dUMP + diphosphate + H(+). It functions in the pathway pyrimidine metabolism; dUMP biosynthesis; dUMP from dCTP (dUTP route): step 2/2. This enzyme is involved in nucleotide metabolism: it produces dUMP, the immediate precursor of thymidine nucleotides and it decreases the intracellular concentration of dUTP so that uracil cannot be incorporated into DNA. This Wolbachia sp. subsp. Drosophila simulans (strain wRi) protein is Deoxyuridine 5'-triphosphate nucleotidohydrolase.